Consider the following 1837-residue polypeptide: Nucleoporin nup211 (1837 aa).

Coiled-coil stretches lie at residues 59-378, 415-519, and 559-625; these read EVNY…YDEI, YKQK…ELDL, and VFRN…QLRY. T650 bears the Phosphothreonine mark. Coiled coils occupy residues 661-1163, 1222-1637, and 1675-1712; these read EQTS…NKLL, LDNR…ENTH, and KAKISVYEKKTRDLQNKITQLEETIENLNKQLSNPEKT. The tract at residues 1464 to 1521 is disordered; that stretch reads KDSNHQLQESASSDAEQITKEQFEQLKSEKERTEKELADSKNELEHLQSEAVDADGKT. The span at 1468-1479 shows a compositional bias: polar residues; sequence HQLQESASSDAE. Residues 1480–1521 show a composition bias toward basic and acidic residues; that stretch reads QITKEQFEQLKSEKERTEKELADSKNELEHLQSEAVDADGKT. The residue at position 1558 (S1558) is a Phosphoserine. Position 1560 is a phosphothreonine (T1560). S1563 carries the post-translational modification Phosphoserine. 2 disordered regions span residues 1602–1642 and 1700–1837; these read EKEK…NIDD and ENLN…KKAK. Positions 1617–1628 are enriched in basic and acidic residues; it reads KSQRIKELEEQA. 4 stretches are compositionally biased toward polar residues: residues 1700-1730, 1753-1763, 1795-1814, and 1827-1837; these read ENLNKQLSNPEKTDESTSSVTETKPVTSKPT, KSLSARLQGTG, IATSKNAAQNAKELSSTAKS, and GGSSSNQKKAK.

Its subcellular location is the cytoplasm. The protein resides in the nucleus. Functionally, functions as a component of the nuclear pore complex (NPC). NPC components, collectively referred to as nucleoporins (NUPs), can play the role of both NPC structural components and of docking or interaction partners for transiently associated nuclear transport factors. Active directional transport is assured by both, a Phe-Gly (FG) repeat affinity gradient for these transport factors across the NPC and a transport cofactor concentration gradient across the nuclear envelope. The sequence is that of Nucleoporin nup211 (nup211) from Schizosaccharomyces pombe (strain 972 / ATCC 24843) (Fission yeast).